Consider the following 205-residue polypeptide: Methylthioribulose-1-phosphate dehydratase (205 aa).

Zn(2+) is bound by residues His94 and His96.

This sequence belongs to the aldolase class II family. MtnB subfamily. Requires Zn(2+) as cofactor.

The enzyme catalyses 5-(methylsulfanyl)-D-ribulose 1-phosphate = 5-methylsulfanyl-2,3-dioxopentyl phosphate + H2O. Its pathway is amino-acid biosynthesis; L-methionine biosynthesis via salvage pathway; L-methionine from S-methyl-5-thio-alpha-D-ribose 1-phosphate: step 2/6. In terms of biological role, catalyzes the dehydration of methylthioribulose-1-phosphate (MTRu-1-P) into 2,3-diketo-5-methylthiopentyl-1-phosphate (DK-MTP-1-P). In Pectobacterium atrosepticum (strain SCRI 1043 / ATCC BAA-672) (Erwinia carotovora subsp. atroseptica), this protein is Methylthioribulose-1-phosphate dehydratase.